The chain runs to 206 residues: Dephospho-CoA kinase (206 aa).

Residues 4 to 200 (TVALTGGIGS…ASYLKLASQF (197 aa)) enclose the DPCK domain. 12-17 (GSGKST) serves as a coordination point for ATP.

It belongs to the CoaE family.

The protein localises to the cytoplasm. The catalysed reaction is 3'-dephospho-CoA + ATP = ADP + CoA + H(+). Its pathway is cofactor biosynthesis; coenzyme A biosynthesis; CoA from (R)-pantothenate: step 5/5. Functionally, catalyzes the phosphorylation of the 3'-hydroxyl group of dephosphocoenzyme A to form coenzyme A. The polypeptide is Dephospho-CoA kinase (Salmonella choleraesuis (strain SC-B67)).